The following is a 253-amino-acid chain: Triosephosphate isomerase (253 aa).

Residue 9–11 participates in substrate binding; it reads NWK. Residue histidine 95 is the Electrophile of the active site. Catalysis depends on glutamate 167, which acts as the Proton acceptor. Substrate-binding positions include glycine 173, serine 213, and 234-235; that span reads GG. Residue serine 213 is modified to Phosphoserine.

Belongs to the triosephosphate isomerase family. As to quaternary structure, homodimer.

Its subcellular location is the cytoplasm. It catalyses the reaction D-glyceraldehyde 3-phosphate = dihydroxyacetone phosphate. The protein operates within carbohydrate biosynthesis; gluconeogenesis. Its pathway is carbohydrate degradation; glycolysis; D-glyceraldehyde 3-phosphate from glycerone phosphate: step 1/1. In terms of biological role, involved in the gluconeogenesis. Catalyzes stereospecifically the conversion of dihydroxyacetone phosphate (DHAP) to D-glyceraldehyde-3-phosphate (G3P). The sequence is that of Triosephosphate isomerase from Bacillus subtilis (strain 168).